The chain runs to 77 residues: Small ribosomal subunit protein bS18 (77 aa).

The protein belongs to the bacterial ribosomal protein bS18 family. In terms of assembly, part of the 30S ribosomal subunit. Forms a tight heterodimer with protein bS6.

Its function is as follows. Binds as a heterodimer with protein bS6 to the central domain of the 16S rRNA, where it helps stabilize the platform of the 30S subunit. This Desulforamulus reducens (strain ATCC BAA-1160 / DSM 100696 / MI-1) (Desulfotomaculum reducens) protein is Small ribosomal subunit protein bS18.